Consider the following 143-residue polypeptide: Transcriptional regulator MraZ (143 aa).

SpoVT-AbrB domains lie at 5–47 (EYEH…PRGV) and 76–119 (AADM…SPRR).

It belongs to the MraZ family. As to quaternary structure, forms oligomers.

Its subcellular location is the cytoplasm. The protein resides in the nucleoid. The protein is Transcriptional regulator MraZ of Roseiflexus castenholzii (strain DSM 13941 / HLO8).